The sequence spans 460 residues: ATP synthase subunit beta (460 aa).

ATP is bound at residue 149-156 (GGAGVGKT).

The protein belongs to the ATPase alpha/beta chains family. As to quaternary structure, F-type ATPases have 2 components, CF(1) - the catalytic core - and CF(0) - the membrane proton channel. CF(1) has five subunits: alpha(3), beta(3), gamma(1), delta(1), epsilon(1). CF(0) has three main subunits: a(1), b(2) and c(9-12). The alpha and beta chains form an alternating ring which encloses part of the gamma chain. CF(1) is attached to CF(0) by a central stalk formed by the gamma and epsilon chains, while a peripheral stalk is formed by the delta and b chains.

Its subcellular location is the cell membrane. The enzyme catalyses ATP + H2O + 4 H(+)(in) = ADP + phosphate + 5 H(+)(out). Functionally, produces ATP from ADP in the presence of a proton gradient across the membrane. The catalytic sites are hosted primarily by the beta subunits. The polypeptide is ATP synthase subunit beta (Acholeplasma laidlawii (strain PG-8A)).